A 206-amino-acid polypeptide reads, in one-letter code: Large ribosomal subunit protein uL4 (206 aa).

Residues 42-54 (RRQQGTHQSQGRS) are compositionally biased toward polar residues. The tract at residues 42–94 (RRQQGTHQSQGRSDVSRTGAKMFKQKGTGRARHSSARAPQFRGGGKAHGPVFR) is disordered. Basic residues predominate over residues 64-76 (FKQKGTGRARHSS).

It belongs to the universal ribosomal protein uL4 family. Part of the 50S ribosomal subunit.

In terms of biological role, one of the primary rRNA binding proteins, this protein initially binds near the 5'-end of the 23S rRNA. It is important during the early stages of 50S assembly. It makes multiple contacts with different domains of the 23S rRNA in the assembled 50S subunit and ribosome. Its function is as follows. Forms part of the polypeptide exit tunnel. This Bartonella tribocorum (strain CIP 105476 / IBS 506) protein is Large ribosomal subunit protein uL4.